Here is a 693-residue protein sequence, read N- to C-terminus: Glycine--tRNA ligase beta subunit (693 aa).

Belongs to the class-II aminoacyl-tRNA synthetase family. As to quaternary structure, tetramer of two alpha and two beta subunits.

It is found in the cytoplasm. The enzyme catalyses tRNA(Gly) + glycine + ATP = glycyl-tRNA(Gly) + AMP + diphosphate. The chain is Glycine--tRNA ligase beta subunit from Vibrio campbellii (strain ATCC BAA-1116).